The chain runs to 778 residues: NAD-dependent deacetylase sir2B (778 aa).

ANK repeat units follow at residues 83 to 112 (LNWTPLHVAVSNKSIEVVTLLLERNIEISI), 114 to 142 (RYTAFHIAACNGDLNIIEKMITMNRVPNG), 148 to 178 (DMETSLFLSITNNHFEISEKIMDYYQSSMNS), 191 to 221 (HGVSPLIMSVLRKNLKMIKKLIEEGDADINS), 225 to 255 (DNSTSLHCAAIIDFTEAIEYLLDIGGIELMN), 260 to 289 (YGNSPIHEAAIKGNFKSIQTFINQLKKIII), 317 to 354 (DGSTPLHLCCNCVNSDNIENNLKSCKVLIEEGGVQVNG), 358 to 390 (GNATALHILACVGEDKSLPLVKYFLSIGSDPTI), and 394 to 423 (YGWTPIHQAYNNKNIQIYQLLLDHLKLTNS). Residues 438-458 (SSTSTSSSSSSSSSSSSSSSS) form a disordered region. The Deacetylase sirtuin-type domain maps to 465-778 (KEELKLKGIE…DYFNTLFNSF (314 aa)). The Proton acceptor role is filled by H608. C616, C619, C642, and C647 together coordinate Zn(2+). The tract at residues 727 to 746 (KLKQQQENESGESSNDNDNN) is disordered. Positions 733–746 (ENESGESSNDNDNN) are enriched in low complexity.

It belongs to the sirtuin family. Zn(2+) is required as a cofactor.

The catalysed reaction is N(6)-acetyl-L-lysyl-[protein] + NAD(+) + H2O = 2''-O-acetyl-ADP-D-ribose + nicotinamide + L-lysyl-[protein]. NAD-dependent deacetylase, which plays an important role in the regulation of transcriptional repression. In Dictyostelium discoideum (Social amoeba), this protein is NAD-dependent deacetylase sir2B (sir2B).